Reading from the N-terminus, the 62-residue chain is U10-hottentoxin-Hj3a (62 aa).

A signal peptide spans 1 to 22 (MQKLLIILILFCILKFNVDVEG). 3 disulfide bridges follow: C28–C46, C33–C59, and C37–C61.

Belongs to the short scorpion toxin superfamily. Potassium channel inhibitor family. Alpha-KTx 23 subfamily. In terms of tissue distribution, expressed by the venom gland.

It localises to the secreted. Functionally, may block potassium channels. In Hottentotta judaicus (Black scorpion), this protein is U10-hottentoxin-Hj3a.